An 806-amino-acid polypeptide reads, in one-letter code: DNA topoisomerase 1 (806 aa).

The segment covering 1 to 15 has biased composition (low complexity); it reads MSVVSNHHSNGNGNS. The interval 1 to 236 is disordered; the sequence is MSVVSNHHSN…KKEPPKKKVK (236 aa). Residues 24–34 are compositionally biased toward basic and acidic residues; the sequence is DEIKKEVKDEP. Basic residues-rich tracts occupy residues 49–60 and 98–108; these read RDKKEKKQKKRK and EKKKSKKNNKK. Over residues 113 to 127 the composition is skewed to acidic residues; it reads SSEDDDEESEGDVSE. Over residues 128–137 the composition is skewed to basic and acidic residues; that stretch reads EDVKPQIHSD. Residues 138–153 show a composition bias toward acidic residues; sequence DELEEEDEAPTTDDEE. Positions 159 to 176 are enriched in basic residues; that stretch reads EKERRKKEKREKKERKEK. Residues 177–188 show a composition bias toward basic and acidic residues; it reads KRLEKENRKIKE. The span at 189 to 199 shows a compositional bias: acidic residues; the sequence is EDDEDSDDEDD. Basic and acidic residues predominate over residues 210–229; it reads KGAEKSKPSTSKKDAGGKKE. 3 interaction with DNA regions span residues 467-468, 530-535, and 634-636; these read KY, RAGNEK, and TVK. Residues 474–803 form the Topo IB-type catalytic domain; that stretch reads SSKIKGEKDF…IDMTNSSDEE (330 aa). Tyr-761 (O-(3'-phospho-DNA)-tyrosine intermediate) is an active-site residue.

Belongs to the type IB topoisomerase family. As to expression, expressed in male germ cells and in mature sperm.

It is found in the nucleus. The protein localises to the nucleolus. Its subcellular location is the chromosome. It catalyses the reaction ATP-independent breakage of single-stranded DNA, followed by passage and rejoining.. Functionally, releases the supercoiling and torsional tension of DNA introduced during the DNA replication and transcription by transiently cleaving and rejoining one strand of the DNA duplex. Introduces a single-strand break via transesterification at a target site in duplex DNA. The scissile phosphodiester is attacked by the catalytic tyrosine of the enzyme, resulting in the formation of a DNA-(3'-phosphotyrosyl)-enzyme intermediate and the expulsion of a 5'-OH DNA strand. The free DNA strand then rotates around the intact phosphodiester bond on the opposing strand, thus removing DNA supercoils. Finally, in the religation step, the DNA 5'-OH attacks the covalent intermediate to expel the active-site tyrosine and restore the DNA phosphodiester backbone. Required for normal spermatogenesis and oogenesis. The polypeptide is DNA topoisomerase 1 (top-1) (Caenorhabditis elegans).